Reading from the N-terminus, the 210-residue chain is Cell division protein SepF (210 aa).

Residues 13–78 (GFGEPTGYDY…VTSTAMNPPM (66 aa)) are disordered. The span at 22–31 (YDYDEMEGDD) shows a compositional bias: acidic residues. Over residues 47–60 (RSEEPHPRPSEPEM) the composition is skewed to basic and acidic residues. Over residues 64–78 (VNTSAVTSTAMNPPM) the composition is skewed to polar residues.

The protein belongs to the SepF family. As to quaternary structure, homodimer. Interacts with FtsZ.

The protein resides in the cytoplasm. Functionally, cell division protein that is part of the divisome complex and is recruited early to the Z-ring. Probably stimulates Z-ring formation, perhaps through the cross-linking of FtsZ protofilaments. Its function overlaps with FtsA. The protein is Cell division protein SepF of Cyanothece sp. (strain PCC 7425 / ATCC 29141).